Reading from the N-terminus, the 155-residue chain is Protein-export protein SecB (155 aa).

Belongs to the SecB family. Homotetramer, a dimer of dimers. One homotetramer interacts with 1 SecA dimer.

The protein localises to the cytoplasm. In terms of biological role, one of the proteins required for the normal export of preproteins out of the cell cytoplasm. It is a molecular chaperone that binds to a subset of precursor proteins, maintaining them in a translocation-competent state. It also specifically binds to its receptor SecA. This chain is Protein-export protein SecB, found in Vibrio atlanticus (strain LGP32) (Vibrio splendidus (strain Mel32)).